The chain runs to 813 residues: Calpain-7 (813 aa).

At Met-1 the chain carries N-acetylmethionine. Thr-95 is modified (phosphothreonine). One can recognise a Calpain catalytic domain in the interval 232-540; that stretch reads RERFAYPMPF…YDVIYLSWNP (309 aa). Active-site residues include Cys-290, His-458, and Asn-478. Positions 541–701 are domain III; sequence GLFKESTCIH…INGKWSGQSA (161 aa). Residues 702–813 form a domain N region; it reads GGCGNFQETH…IIPIKITQLQ (112 aa).

It belongs to the peptidase C2 family. As to expression, ubiquitous.

Its subcellular location is the nucleus. In terms of biological role, calcium-regulated non-lysosomal thiol-protease. The chain is Calpain-7 (CAPN7) from Homo sapiens (Human).